We begin with the raw amino-acid sequence, 330 residues long: ADP-L-glycero-D-manno-heptose-6-epimerase (330 aa).

NADP(+)-binding positions include 11–12, 32–33, Gln39, Gln54, 75–79, and Asn92; these read FI, DD, and QGACA. The active-site Proton acceptor is the Tyr139. Lys143 is a binding site for NADP(+). Residue Asn168 coordinates substrate. NADP(+) is bound by residues Val169 and Lys177. Lys177 acts as the Proton acceptor in catalysis. Substrate is bound by residues Arg179, His186, 200 to 203, Arg213, and Tyr292; that span reads FGEH.

Belongs to the NAD(P)-dependent epimerase/dehydratase family. HldD subfamily. Homopentamer. NADP(+) is required as a cofactor.

It catalyses the reaction ADP-D-glycero-beta-D-manno-heptose = ADP-L-glycero-beta-D-manno-heptose. The protein operates within nucleotide-sugar biosynthesis; ADP-L-glycero-beta-D-manno-heptose biosynthesis; ADP-L-glycero-beta-D-manno-heptose from D-glycero-beta-D-manno-heptose 7-phosphate: step 4/4. Functionally, catalyzes the interconversion between ADP-D-glycero-beta-D-manno-heptose and ADP-L-glycero-beta-D-manno-heptose via an epimerization at carbon 6 of the heptose. In Pseudomonas aeruginosa (strain UCBPP-PA14), this protein is ADP-L-glycero-D-manno-heptose-6-epimerase.